The chain runs to 169 residues: Mitochondrial ATP-independent inner membrane protease subunit 1b (169 aa).

Residues Ser-47 and Lys-91 contribute to the active site.

Belongs to the peptidase S26 family. IMP1 subfamily. Heterodimer of 2 subunits, IMP1A/B and IMP12.

The protein localises to the mitochondrion inner membrane. Catalyzes the removal of transit peptides required for the targeting of proteins from the mitochondrial matrix, across the inner membrane, into the inter-membrane space. The chain is Mitochondrial ATP-independent inner membrane protease subunit 1b from Arabidopsis thaliana (Mouse-ear cress).